A 239-amino-acid chain; its full sequence is uncharacterized protein (239 aa).

A run of 6 helical transmembrane segments spans residues 30-50, 76-96, 107-127, 157-177, 188-208, and 214-234; these read VALL…IELI, LYLG…IFII, LIPI…FGYI, FIIL…FQIL, MMLS…AIIT, and LIQL…ILVL.

This sequence belongs to the TatC family.

Its subcellular location is the plastid. It localises to the chloroplast membrane. This is an uncharacterized protein from Cyanidium caldarium (Red alga).